The chain runs to 508 residues: Flagellin (508 aa).

This sequence belongs to the bacterial flagellin family.

The protein resides in the secreted. It localises to the bacterial flagellum. Functionally, flagellin is the subunit protein which polymerizes to form the filaments of bacterial flagella. The protein is Flagellin (fliC) of Salmonella oranienberg.